A 114-amino-acid chain; its full sequence is Iron-sulfur cluster insertion protein ErpA (114 aa).

Residues Cys42, Cys106, and Cys108 each contribute to the iron-sulfur cluster site.

Belongs to the HesB/IscA family. Homodimer. Iron-sulfur cluster serves as cofactor.

Its function is as follows. Required for insertion of 4Fe-4S clusters for at least IspG. This Sodalis glossinidius (strain morsitans) protein is Iron-sulfur cluster insertion protein ErpA.